A 96-amino-acid chain; its full sequence is Molybdopterin synthase sulfur carrier subunit (96 aa).

G96 is subject to 1-thioglycine; alternate. Position 96 is a glycyl adenylate; alternate (G96).

It belongs to the MoaD family. MOCS2A subfamily. As to quaternary structure, heterotetramer; composed of 2 small (MOCS2A) and 2 large (MOCS2B) subunits. C-terminal thiocarboxylation occurs in 2 steps, it is first acyl-adenylated (-COAMP) via the hesA/moeB/thiF part of UBA4, then thiocarboxylated (-COSH) via the rhodanese domain of UBA4.

It is found in the cytoplasm. It participates in cofactor biosynthesis; molybdopterin biosynthesis. Acts as a sulfur carrier required for molybdopterin biosynthesis. Component of the molybdopterin synthase complex that catalyzes the conversion of precursor Z into molybdopterin by mediating the incorporation of 2 sulfur atoms into precursor Z to generate a dithiolene group. In the complex, serves as sulfur donor by being thiocarboxylated (-COSH) at its C-terminus by UBA4. After interaction with MOCS2B, the sulfur is then transferred to precursor Z to form molybdopterin. In Phaeosphaeria nodorum (strain SN15 / ATCC MYA-4574 / FGSC 10173) (Glume blotch fungus), this protein is Molybdopterin synthase sulfur carrier subunit.